The primary structure comprises 933 residues: Envelope glycoprotein B (933 aa).

The N-terminal stretch at Met-1–Ala-36 is a signal peptide. Low complexity predominate over residues Ala-36–Pro-49. The interval Ala-36–Arg-115 is disordered. At Ala-37–Pro-797 the chain is on the virion surface side. Residues Ala-54 to Asp-69 show a composition bias toward acidic residues. Residues Asn-107 and Asn-161 are each glycosylated (N-linked (GlcNAc...) asparagine; by host). Disulfide bonds link Cys-136/Cys-596, Cys-153/Cys-552, Cys-227/Cys-291, Cys-384/Cys-432, and Cys-619/Cys-656. Involved in fusion and/or binding to host membrane regions lie at residues Thr-193 to Tyr-199 and Ala-278 to Thr-285. N-linked (GlcNAc...) asparagine; by host glycans are attached at residues Asn-418 and Asn-450. N-linked (GlcNAc...) asparagine; by host glycans are attached at residues Asn-697 and Asn-747. 2 hydrophobic membrane proximal region regions span residues Ile-742–Ser-795 and Leu-754–Ser-795. A helical transmembrane segment spans residues Phe-798–Met-818. Over Arg-819 to Pro-933 the chain is Intravirion. The short motif at Tyr-881 to Leu-884 is the Golgi targeting element. Positions Tyr-920–Leu-923 match the Internalization motif motif.

Belongs to the herpesviridae glycoprotein B family. In terms of assembly, homotrimer; disulfide-linked. Binds to heparan sulfate proteoglycans. Interacts with gH/gL heterodimer.

It is found in the virion membrane. The protein resides in the host cell membrane. It localises to the host endosome membrane. Its subcellular location is the host Golgi apparatus membrane. In terms of biological role, envelope glycoprotein that forms spikes at the surface of virion envelope. Essential for the initial attachment to heparan sulfate moieties of the host cell surface proteoglycans. Involved in fusion of viral and cellular membranes leading to virus entry into the host cell. Following initial binding to its host receptors, membrane fusion is mediated by the fusion machinery composed at least of gB and the heterodimer gH/gL. May be involved in the fusion between the virion envelope and the outer nuclear membrane during virion egress. This chain is Envelope glycoprotein B, found in Herpesvirus ateles type 1 (strain Lennette).